A 368-amino-acid chain; its full sequence is MTSGSLQFTVLRAVNPATDAQRESMLREPGFGKYHTDHMVSIDYAEGRGWHNARVIPYGPIELDPSAIVLHYAQEVFEGLKAYRWADGSIVSFRADANAARLRSSARRLAIPELPDAVFIESLRQLIAVDKAWVPGAGGEEALYLRPFIFATEPGLGVRPATQYRYLLIASPAGAYFKGGIAPVSVWVSTEYVRACPGGTGAAKFGGNYAASLLAQAEAAENGCDQVVWLDAVERRYIEEMGGMNIFFVLGSGGSARLVTPELSGSLLPGITRDSLLQLAIDAGFAVEERRIDIDEWQKKAAAGEITEVFACGTAAVITPVARVRHGASEFRIADGQPGEVTMALRDTLTGIQRGTFADTHGWMARLG.

Arg-101 serves as a coordination point for pyridoxal 5'-phosphate. Lys-204 bears the N6-(pyridoxal phosphate)lysine mark. Pyridoxal 5'-phosphate is bound by residues Tyr-209, 271 to 272, and Thr-314; that span reads IT.

Belongs to the class-IV pyridoxal-phosphate-dependent aminotransferase family. In terms of assembly, homodimer. It depends on pyridoxal 5'-phosphate as a cofactor.

The enzyme catalyses L-leucine + 2-oxoglutarate = 4-methyl-2-oxopentanoate + L-glutamate. It catalyses the reaction L-isoleucine + 2-oxoglutarate = (S)-3-methyl-2-oxopentanoate + L-glutamate. The catalysed reaction is L-valine + 2-oxoglutarate = 3-methyl-2-oxobutanoate + L-glutamate. It participates in amino-acid biosynthesis; L-isoleucine biosynthesis; L-isoleucine from 2-oxobutanoate: step 4/4. The protein operates within amino-acid biosynthesis; L-leucine biosynthesis; L-leucine from 3-methyl-2-oxobutanoate: step 4/4. Its pathway is amino-acid biosynthesis; L-valine biosynthesis; L-valine from pyruvate: step 4/4. Functionally, catalyzes the reversible transfers of an amino group from glutamate to the alpha-ketoacid of the respective amino acid in the final step in the biosynthesis of branchedchain amino acids. The polypeptide is Branched-chain-amino-acid aminotransferase (ilvE) (Mycobacterium tuberculosis (strain CDC 1551 / Oshkosh)).